The sequence spans 381 residues: Arginine biosynthesis bifunctional protein ArgJ (381 aa).

The substrate site is built by T143, K165, T176, E255, N376, and T381. The active-site Nucleophile is the T176.

This sequence belongs to the ArgJ family. As to quaternary structure, heterotetramer of two alpha and two beta chains.

It is found in the cytoplasm. The catalysed reaction is N(2)-acetyl-L-ornithine + L-glutamate = N-acetyl-L-glutamate + L-ornithine. It carries out the reaction L-glutamate + acetyl-CoA = N-acetyl-L-glutamate + CoA + H(+). It participates in amino-acid biosynthesis; L-arginine biosynthesis; L-ornithine and N-acetyl-L-glutamate from L-glutamate and N(2)-acetyl-L-ornithine (cyclic): step 1/1. Its pathway is amino-acid biosynthesis; L-arginine biosynthesis; N(2)-acetyl-L-ornithine from L-glutamate: step 1/4. Functionally, catalyzes two activities which are involved in the cyclic version of arginine biosynthesis: the synthesis of N-acetylglutamate from glutamate and acetyl-CoA as the acetyl donor, and of ornithine by transacetylation between N(2)-acetylornithine and glutamate. This is Arginine biosynthesis bifunctional protein ArgJ from Thermus thermophilus (strain ATCC BAA-163 / DSM 7039 / HB27).